The primary structure comprises 360 residues: Pyrimidine monooxygenase RutA (360 aa).

FMN-binding positions include isoleucine 49 to lysine 50, asparagine 115, glutamate 124, arginine 140 to tyrosine 141, and serine 190.

This sequence belongs to the NtaA/SnaA/DszA monooxygenase family. RutA subfamily.

It carries out the reaction uracil + FMNH2 + NADH + O2 = (Z)-3-ureidoacrylate + FMN + NAD(+) + H2O + H(+). The enzyme catalyses thymine + FMNH2 + NADH + O2 = (Z)-2-methylureidoacrylate + FMN + NAD(+) + H2O + H(+). In terms of biological role, catalyzes the pyrimidine ring opening between N-3 and C-4 by an unusual flavin hydroperoxide-catalyzed mechanism, adding oxygen atoms in the process to yield ureidoacrylate peracid, that immediately reacts with FMN forming ureidoacrylate and FMN-N(5)-oxide. The FMN-N(5)-oxide reacts spontaneously with NADH to produce FMN. Requires the flavin reductase RutF to regenerate FMN in vivo. This chain is Pyrimidine monooxygenase RutA, found in Pseudomonas syringae pv. syringae (strain B728a).